Consider the following 604-residue polypeptide: Glutamyl-tRNA(Gln) amidotransferase subunit B, mitochondrial (604 aa).

Residues 1-48 constitute a mitochondrion transit peptide; sequence MIRQCLSRRGAYSRYRLAARGVELAEPFHHQSSRPQGRRNWSSSPRCS. Residues 28–57 form a disordered region; the sequence is FHHQSSRPQGRRNWSSSPRCSLDIRTDTPR. A compositionally biased stretch (polar residues) spans 33–46; the sequence is SRPQGRRNWSSSPR.

It belongs to the GatB/GatE family. GatB subfamily. Subunit of the heterotrimeric GatCAB amidotransferase (AdT) complex, composed of A, B and C subunits.

The protein localises to the mitochondrion. The enzyme catalyses L-glutamyl-tRNA(Gln) + L-glutamine + ATP + H2O = L-glutaminyl-tRNA(Gln) + L-glutamate + ADP + phosphate + H(+). Functionally, allows the formation of correctly charged Gln-tRNA(Gln) through the transamidation of misacylated Glu-tRNA(Gln) in the mitochondria. The reaction takes place in the presence of glutamine and ATP through an activated gamma-phospho-Glu-tRNA(Gln). This is Glutamyl-tRNA(Gln) amidotransferase subunit B, mitochondrial from Ajellomyces dermatitidis (strain ER-3 / ATCC MYA-2586) (Blastomyces dermatitidis).